Reading from the N-terminus, the 60-residue chain is Short neurotoxin 1 (60 aa).

4 disulfide bridges follow: Cys-3/Cys-22, Cys-17/Cys-39, Cys-41/Cys-52, and Cys-53/Cys-58.

Belongs to the three-finger toxin family. Short-chain subfamily. Type I alpha-neurotoxin sub-subfamily. As to expression, expressed by the venom gland.

The protein resides in the secreted. Functionally, binds to muscle nicotinic acetylcholine receptor (nAChR) and inhibit acetylcholine from binding to the receptor, thereby impairing neuromuscular transmission. The chain is Short neurotoxin 1 from Dendroaspis jamesoni kaimosae (Eastern Jameson's mamba).